A 149-amino-acid chain; its full sequence is Deoxyuridine 5'-triphosphate nucleotidohydrolase (149 aa).

Residues 68 to 70 (RSG), N81, 85 to 87 (LID), and M95 each bind substrate.

It belongs to the dUTPase family. Mg(2+) is required as a cofactor.

It catalyses the reaction dUTP + H2O = dUMP + diphosphate + H(+). It functions in the pathway pyrimidine metabolism; dUMP biosynthesis; dUMP from dCTP (dUTP route): step 2/2. Functionally, this enzyme is involved in nucleotide metabolism: it produces dUMP, the immediate precursor of thymidine nucleotides and it decreases the intracellular concentration of dUTP so that uracil cannot be incorporated into DNA. This Bordetella pertussis (strain Tohama I / ATCC BAA-589 / NCTC 13251) protein is Deoxyuridine 5'-triphosphate nucleotidohydrolase.